The following is a 254-amino-acid chain: Large ribosomal subunit protein uL2 (254 aa).

This sequence belongs to the universal ribosomal protein uL2 family.

The sequence is that of Large ribosomal subunit protein uL2 (RPL2) from Candida glabrata (strain ATCC 2001 / BCRC 20586 / JCM 3761 / NBRC 0622 / NRRL Y-65 / CBS 138) (Yeast).